Here is a 523-residue protein sequence, read N- to C-terminus: MSQQVIIFDTTLRDGEQALQASLSVKEKLQIALALERMGVDVMEVGFPVSSPGDFESVQTIARTIKNSRVCALARCVEKDIDVAAESLKVAEAFRIHTFIATSPMHIATKLRSTLDEVIERAIYMVKRARNYTDDVEFSCEDAGRTPIADLARVVEAAINAGATTINIPDTVGYTMPFEYANIISGLYDRVPNIDKAIISVHTHDDLGIAVGNALAAVHAGARQVEGAMNGIGERAGNCALEEVIMAIKVRKDIMNVHTNINHHEIWRTSQTVSQICNMPIPANKAIVGTGAFAHSSGIHQDGVLKNRENYEIMTPESIGLNQVQLNLTSRSGRAAVKHRMEEMGYQESDYNLDHLYDAFLKLADKKGQVFDYDLEALAFINKQQEEPEHFRLDYFNVQSGSSDIATASIKLVCGDEIKTEAANGNGPVDAIYQAINRVTDYNIELVKYGLSAKGHGKDALGQVDIVVDYNGRRFHGVGLATDIVESSAKAMVHVLNNIWRAAEVEKELQRKAQNKENNKETV.

The Pyruvate carboxyltransferase domain occupies 5-267; that stretch reads VIIFDTTLRD…HTNINHHEIW (263 aa). 4 residues coordinate Mn(2+): aspartate 14, histidine 202, histidine 204, and asparagine 238. Positions 392 to 523 are regulatory domain; it reads RLDYFNVQSG…QNKENNKETV (132 aa).

This sequence belongs to the alpha-IPM synthase/homocitrate synthase family. LeuA type 1 subfamily. In terms of assembly, homodimer. Mn(2+) serves as cofactor.

The protein resides in the cytoplasm. The catalysed reaction is 3-methyl-2-oxobutanoate + acetyl-CoA + H2O = (2S)-2-isopropylmalate + CoA + H(+). The protein operates within amino-acid biosynthesis; L-leucine biosynthesis; L-leucine from 3-methyl-2-oxobutanoate: step 1/4. Its function is as follows. Catalyzes the condensation of the acetyl group of acetyl-CoA with 3-methyl-2-oxobutanoate (2-ketoisovalerate) to form 3-carboxy-3-hydroxy-4-methylpentanoate (2-isopropylmalate). This is 2-isopropylmalate synthase from Klebsiella pneumoniae subsp. pneumoniae (strain ATCC 700721 / MGH 78578).